The primary structure comprises 203 residues: Putative 3-methyladenine DNA glycosylase (203 aa).

The protein belongs to the DNA glycosylase MPG family.

This chain is Putative 3-methyladenine DNA glycosylase, found in Desulfitobacterium hafniense (strain Y51).